A 586-amino-acid polypeptide reads, in one-letter code: Asparagine synthetase [glutamine-hydrolyzing] (586 aa).

C2 acts as the For GATase activity in catalysis. Residues 2 to 185 (CGILAVLGCS…PGHLYSSKSG (184 aa)) form the Glutamine amidotransferase type-2 domain. L-glutamine contacts are provided by residues 50-54 (RLAII), 75-77 (NGE), and D98. Residues 194–517 (PPWFNESVPS…PQNSARLTVP (324 aa)) form the Asparagine synthetase domain. Residues L232, V268, and 342–343 (SG) contribute to the ATP site.

The protein belongs to the asparagine synthetase family.

The enzyme catalyses L-aspartate + L-glutamine + ATP + H2O = L-asparagine + L-glutamate + AMP + diphosphate + H(+). The protein operates within amino-acid biosynthesis; L-asparagine biosynthesis; L-asparagine from L-aspartate (L-Gln route): step 1/1. This chain is Asparagine synthetase [glutamine-hydrolyzing], found in Brassica oleracea (Wild cabbage).